A 710-amino-acid chain; its full sequence is Choline transporter-like protein 2 (710 aa).

The Cytoplasmic portion of the chain corresponds to 1–34; that stretch reads MEDDGKSPPDSAYGEPKKYDPNFKGPIQNRGCTD. The chain crosses the membrane as a helical span at residues 35–55; that stretch reads ILCCILIVLGIIAYVAVGIVA. Residues 56–236 lie on the Extracellular side of the membrane; sequence WTYGDPRKVI…KIFEDYTVSW (181 aa). Residues Asn147, Asn190, and Asn204 are each glycosylated (N-linked (GlcNAc...) asparagine). Residues 237-257 form a helical membrane-spanning segment; sequence YWIIIGLIIAMVISLIFVVLL. The Cytoplasmic portion of the chain corresponds to 258-260; sequence RFL. The helical transmembrane segment at 261–281 threads the bilayer; the sequence is AGIMVWVMIVLVIAVMGYGIF. Over 282-319 the chain is Extracellular; it reads HCYMEYARLKGQSGSDVTLKDIGFQTDIRVYLHLRQTW. The chain crosses the membrane as a helical span at residues 320–340; sequence LAFMIILCILEVIVILLLIFL. The Cytoplasmic segment spans residues 341–368; the sequence is RKRIMIAIALIKEASRAVGFVMSSLVFP. Residues 369-389 traverse the membrane as a helical segment; that stretch reads LFTFLLVCLCIAYWAITAVFL. The Extracellular segment spans residues 390–458; the sequence is STSNEAVYKV…FQIYNAFMFL (69 aa). N-linked (GlcNAc...) asparagine glycans are attached at residues Asn401, Asn418, and Asn421. Residues 459 to 481 form a helical membrane-spanning segment; that stretch reads WLANFVIALGQVTLAGAFASYYW. Residues 482–508 lie on the Cytoplasmic side of the membrane; sequence AFKKPDDMPAFPIFSSLGRALRYHTGS. A helical membrane pass occupies residues 509 to 529; it reads LAFGSLILAIVQMIRILLEYL. The Extracellular segment spans residues 530-567; it reads DHKLKGADNKCARFLLCCLKCCFWCLEKFIKFLNRNAY. The chain crosses the membrane as a helical span at residues 568 to 588; it reads IMIAIYGTNFCTSARNAFFLL. Over 589–603 the chain is Cytoplasmic; sequence MRNIIRVAVLDKVTD. Residues 604–624 traverse the membrane as a helical segment; it reads FLLFLGKLLVVGCVGILAFFF. Topologically, residues 625 to 642 are extracellular; sequence FSRRIQIVQDTAPTLNYY. The chain crosses the membrane as a helical span at residues 643–663; it reads WVPILTVILGSYLIAHGFFSV. At 664-710 the chain is on the cytoplasmic side; it reads YGMCVDTLFLCFLEDLERNDGSTERPYFMSGSLQKLLNKSNQTKPDK.

It belongs to the CTL (choline transporter-like) family.

It localises to the cell membrane. The protein resides in the mitochondrion outer membrane. The catalysed reaction is choline(out) + n H(+)(in) = choline(in) + n H(+)(out). The enzyme catalyses ethanolamine(out) + n H(+)(in) = ethanolamine(in) + n H(+)(out). Functionally, choline/H+ antiporter, mainly in mitochodria. Also acts as a low-affinity ethanolamine/H+ antiporter, regulating the supply of extracellular ethanolamine (Etn) for the CDP-Etn pathway, redistribute intracellular Etn and balance the CDP-Cho and CDP-Etn arms of the Kennedy pathway. This Xenopus laevis (African clawed frog) protein is Choline transporter-like protein 2 (slc44a2).